The primary structure comprises 300 residues: Ribosomal protein bS6--L-glutamate ligase (300 aa).

Positions 104–287 (MQLLARQGID…IAGKMIRWIE (184 aa)) constitute an ATP-grasp domain. ATP contacts are provided by residues Lys141, 178–179 (EY), Asp187, and 211–213 (RSN). Mg(2+)-binding residues include Asp248, Glu260, and Asn262. The Mn(2+) site is built by Asp248, Glu260, and Asn262.

The protein belongs to the RimK family. Requires Mg(2+) as cofactor. Mn(2+) serves as cofactor.

Functionally, an L-glutamate ligase that catalyzes the ATP-dependent post-translational addition of glutamate residues to the C-terminus of ribosomal protein bS6 (RpsF). Is also able to catalyze the synthesis of poly-alpha-glutamate in vitro, via ATP hydrolysis from unprotected glutamate as substrate. The number of glutamate residues added to either RpsF or to poly-alpha-glutamate changes with pH. This is Ribosomal protein bS6--L-glutamate ligase from Shigella boydii serotype 18 (strain CDC 3083-94 / BS512).